Consider the following 402-residue polypeptide: Arginine deiminase (402 aa).

The active-site Amidino-cysteine intermediate is the Cys391.

The protein belongs to the arginine deiminase family.

It is found in the cytoplasm. It carries out the reaction L-arginine + H2O = L-citrulline + NH4(+). It functions in the pathway amino-acid degradation; L-arginine degradation via ADI pathway; carbamoyl phosphate from L-arginine: step 1/2. The sequence is that of Arginine deiminase from Mycobacterium marinum (strain ATCC BAA-535 / M).